The following is a 123-amino-acid chain: Ribosome-binding factor A (123 aa).

Belongs to the RbfA family. Monomer. Binds 30S ribosomal subunits, but not 50S ribosomal subunits or 70S ribosomes.

The protein resides in the cytoplasm. In terms of biological role, one of several proteins that assist in the late maturation steps of the functional core of the 30S ribosomal subunit. Associates with free 30S ribosomal subunits (but not with 30S subunits that are part of 70S ribosomes or polysomes). Required for efficient processing of 16S rRNA. May interact with the 5'-terminal helix region of 16S rRNA. The polypeptide is Ribosome-binding factor A (Koribacter versatilis (strain Ellin345)).